The chain runs to 255 residues: MAKLMNKLVDSFEHDEIPDVGCVRAVLAELVLTFLFVFTGVSAAMAAGSDGKPGDAMPMATLAAVAIAHALAAGVLVTAGFHVSGGHLNPAVTVGLMVRGHITKLRAVLYVAAQLLASSAACVLLRFLSGGMVTPVHALGRGISPMQGLVMEVILTFSLLFVTYAMILDPRSQVRAIGPLLTGLIVGANSLAGGNFTGASMNPARSFGPALATGDWTNHWVYWIGPLLGGPLAGFVYESLFLVQKMHEPLLNGEV.

A run of 2 helical transmembrane segments spans residues 25–45 (AVLA…SAAM) and 61–81 (TLAA…TAGF). An NPA 1 motif is present at residues 89–91 (NPA). A run of 3 helical transmembrane segments spans residues 108–128 (VLYV…LRFL), 148–168 (GLVM…AMIL), and 176–196 (AIGP…GGNF). The NPA 2 motif lies at 202 to 204 (NPA). Residues 223–243 (WIGPLLGGPLAGFVYESLFLV) form a helical membrane-spanning segment.

It belongs to the MIP/aquaporin (TC 1.A.8) family. TIP (TC 1.A.8.10) subfamily.

The protein resides in the vacuole membrane. Its function is as follows. Aquaporins facilitate the transport of water and small neutral solutes across cell membranes. This is Aquaporin TIP4-1 (TIP4-1) from Zea mays (Maize).